Here is a 100-residue protein sequence, read N- to C-terminus: MTKVTREEVEHIANLARLQISPEETEEMANTLESILDFAKQNDSADTEGVEPTYHVLDLQNVLREDKAIKGIPQELALKNAKETEDGQFKVPTIMNEEDA.

Belongs to the GatC family. In terms of assembly, heterotrimer of A, B and C subunits.

It carries out the reaction L-glutamyl-tRNA(Gln) + L-glutamine + ATP + H2O = L-glutaminyl-tRNA(Gln) + L-glutamate + ADP + phosphate + H(+). It catalyses the reaction L-aspartyl-tRNA(Asn) + L-glutamine + ATP + H2O = L-asparaginyl-tRNA(Asn) + L-glutamate + ADP + phosphate + 2 H(+). Its function is as follows. Allows the formation of correctly charged Asn-tRNA(Asn) or Gln-tRNA(Gln) through the transamidation of misacylated Asp-tRNA(Asn) or Glu-tRNA(Gln) in organisms which lack either or both of asparaginyl-tRNA or glutaminyl-tRNA synthetases. The reaction takes place in the presence of glutamine and ATP through an activated phospho-Asp-tRNA(Asn) or phospho-Glu-tRNA(Gln). In Staphylococcus aureus (strain N315), this protein is Aspartyl/glutamyl-tRNA(Asn/Gln) amidotransferase subunit C (gatC).